Consider the following 123-residue polypeptide: Integration host factor subunit alpha (123 aa).

A disordered region spans residues 97-123; it reads NANGSAPSMSSSASAVDDDKSESASRT. Low complexity predominate over residues 98 to 111; the sequence is ANGSAPSMSSSASA. Positions 113–123 are enriched in basic and acidic residues; that stretch reads DDDKSESASRT.

Belongs to the bacterial histone-like protein family. As to quaternary structure, heterodimer of an alpha and a beta chain.

Its function is as follows. This protein is one of the two subunits of integration host factor, a specific DNA-binding protein that functions in genetic recombination as well as in transcriptional and translational control. The sequence is that of Integration host factor subunit alpha from Rhodopseudomonas palustris (strain BisB5).